The following is a 295-amino-acid chain: 33 kDa chaperonin (295 aa).

2 disulfide bridges follow: C237–C239 and C270–C273.

Belongs to the HSP33 family. Under oxidizing conditions two disulfide bonds are formed involving the reactive cysteines. Under reducing conditions zinc is bound to the reactive cysteines and the protein is inactive.

The protein resides in the cytoplasm. In terms of biological role, redox regulated molecular chaperone. Protects both thermally unfolding and oxidatively damaged proteins from irreversible aggregation. Plays an important role in the bacterial defense system toward oxidative stress. The protein is 33 kDa chaperonin of Lactiplantibacillus plantarum (strain ATCC BAA-793 / NCIMB 8826 / WCFS1) (Lactobacillus plantarum).